Consider the following 400-residue polypeptide: Argininosuccinate synthase (400 aa).

ATP contacts are provided by residues 10–18 (AYSGGVDTS) and Ala38. Tyr89 is an L-citrulline binding site. ATP is bound at residue Gly119. Residues Thr121, Asn125, and Asp126 each coordinate L-aspartate. Asn125 contacts L-citrulline. Positions 129, 177, 186, 262, and 274 each coordinate L-citrulline.

The protein belongs to the argininosuccinate synthase family. Type 1 subfamily. In terms of assembly, homotetramer.

It localises to the cytoplasm. It catalyses the reaction L-citrulline + L-aspartate + ATP = 2-(N(omega)-L-arginino)succinate + AMP + diphosphate + H(+). It functions in the pathway amino-acid biosynthesis; L-arginine biosynthesis; L-arginine from L-ornithine and carbamoyl phosphate: step 2/3. This is Argininosuccinate synthase from Nostoc punctiforme (strain ATCC 29133 / PCC 73102).